The chain runs to 499 residues: Serine/threonine-protein phosphatase 5 (499 aa).

The segment at 1-23 (MAMAEGERTECAEPPRDEPPAEG) is disordered. Ala2 bears the N-acetylalanine mark. TPR repeat units lie at residues 28 to 61 (AEEL…NPSN), 62 to 95 (AIYY…DKKY), and 96 to 129 (IKGY…KPND). A catalytic region spans residues 200–499 (DQKKLHRKCA…ANTLLQLGMM (300 aa)). Residues Asp242, His244, and Asp271 each coordinate Mg(2+). His244 is a substrate binding site. Residues Arg275 and 303–304 (NH) each bind substrate. Asn303 is a Mg(2+) binding site. His304 (proton donor/acceptor) is an active-site residue. His352 contributes to the Mg(2+) binding site. Residues Arg400 and His427 each contribute to the substrate site. His427 is a binding site for Mg(2+). The interval 495 to 499 (QLGMM) is required for autoinhibition.

Belongs to the PPP phosphatase family. PP-5 (PP-T) subfamily. As to quaternary structure, probably forms a complex composed of chaperones HSP90 and HSP70, co-chaperones STIP1/HOP, CDC37, PPP5C, PTGES3/p23, TSC1 and client protein TSC2. Probably forms a complex composed of chaperones HSP90 and HSP70, co-chaperones CDC37, PPP5C, TSC1 and client protein TSC2, CDK4, AKT, RAF1 and NR3C1; this complex does not contain co-chaperones STIP1/HOP and PTGES3/p23. Part of a complex with HSP90/HSP90AA1 and steroid receptors. Interacts (via TPR repeats) with HSP90AA1 (via TPR repeat-binding motif) or HSPA1A/HSPA1B; the interaction is direct and activates the phosphatase activity. Dissociates from HSPA1A/HSPA1B and HSP90AA1 in response to arachidonic acid. Interacts with CPNE1 (via VWFA domain). Interacts with CDC16, CDC27. Interacts with KLHDC10 (via the 6 Kelch repeats); inhibits the phosphatase activity on MAP3K5. Interacts with ATM and ATR; both interactions are induced by DNA damage and enhance ATM and ATR kinase activity. Interacts with RAD17; reduced by DNA damage. Interacts with nuclear receptors such as NR3C1/GCR and PPARG (activated by agonist); regulates their transactivation activities. Interacts (via TPR repeats) with S100 proteins S100A1, S100A2, S100A6, S100B and S100P; the interactions are calcium-dependent, strongly activate PPP5C phosphatase activity and compete with HSP90AA1 and MAP3K5 interactions. Interacts with SMAD2 and SMAD3 but not with SMAD1; decreases SMAD3 phosphorylation and protein levels. Interacts (via TPR repeats) with CRY1 and CRY2; the interaction with CRY2 down-regulates the phosphatase activity on CSNK1E. Interacts (via TPR repeats) with the active form of RAC1, GNA12 or GNA13; these interactions activate the phosphatase activity and translocate PPP5C to the cell membrane. Interacts with FLCN. Mg(2+) is required as a cofactor. The cofactor is Mn(2+). In terms of processing, activated by at least two different proteolytic cleavages producing a 56 kDa and a 50 kDa form. As to expression, predominantly found in brain and, in lower levels, in testis, but was nearly undetectable in spleen, lung, skeletal muscle, kidney and liver.

The protein localises to the nucleus. It localises to the cytoplasm. The protein resides in the cell membrane. The enzyme catalyses O-phospho-L-seryl-[protein] + H2O = L-seryl-[protein] + phosphate. The catalysed reaction is O-phospho-L-threonyl-[protein] + H2O = L-threonyl-[protein] + phosphate. With respect to regulation, autoinhibited. In the autoinhibited state, the TPR domain interacts with the catalytic region and prevents substrate access to the catalytic pocket. Allosterically activated by various polyunsaturated fatty acids, free long-chain fatty-acids and long-chain fatty acyl-CoA esters, arachidonic acid being the most effective activator. HSP90A and probably RAC1, GNA12 and GNA13 can also release the autoinhibition by the TPR repeat. Activation by RAC1, GNA12 and GNA13 is synergistic with the one produced by fatty acids binding. Inhibited by okadaic acid. Functionally, serine/threonine-protein phosphatase that dephosphorylates a myriad of proteins involved in different signaling pathways including the kinases CSNK1E, ASK1/MAP3K5, PRKDC and RAF1, the nuclear receptors NR3C1, PPARG, ESR1 and ESR2, SMAD proteins and TAU/MAPT. Implicated in wide ranging cellular processes, including apoptosis, differentiation, DNA damage response, cell survival, regulation of ion channels or circadian rhythms, in response to steroid and thyroid hormones, calcium, fatty acids, TGF-beta as well as oxidative and genotoxic stresses. Participates in the control of DNA damage response mechanisms such as checkpoint activation and DNA damage repair through, for instance, the regulation ATM/ATR-signaling and dephosphorylation of PRKDC and TP53BP1. Inhibits ASK1/MAP3K5-mediated apoptosis induced by oxidative stress. Plays a positive role in adipogenesis, mainly through the dephosphorylation and activation of PPARG transactivation function. Also dephosphorylates and inhibits the anti-adipogenic effect of NR3C1. Regulates the circadian rhythms, through the dephosphorylation and activation of CSNK1E. May modulate TGF-beta signaling pathway by the regulation of SMAD3 phosphorylation and protein expression levels. Dephosphorylates and may play a role in the regulation of TAU/MAPT. Through their dephosphorylation, may play a role in the regulation of ions channels such as KCNH2. Dephosphorylate FNIP1, disrupting interaction with HSP90AA1/Hsp90. This is Serine/threonine-protein phosphatase 5 (Ppp5c) from Rattus norvegicus (Rat).